The following is a 273-amino-acid chain: MLSGNGQLDANKWTPFINSQTWTTYILPGLWGTLKSAVFSVILALVMGTALGLGRISEIRILRWFCAVIIETFRAIPVLILMIFAYQMFAQYNIVPSSQLAFAAVVFGLTMYNGSVIAEILRSGIASLPKGQKEAAIALGMSSRQTTWSILLPQAVAAMLPALISQMVIALKDSALGYQIGYIEVVRSGIQSASVNRNYLAALFVVALIMIVLNFSLTALASRIERQLRAGRARKNIVAKVPEQPDQGLETKDNVNVDWQDPDYKDLKTPGVQ.

A run of 5 helical transmembrane segments spans residues 26 to 46, 64 to 84, 100 to 120, 150 to 170, and 200 to 220; these read ILPG…LALV, WFCA…LMIF, LAFA…IAEI, ILLP…MVIA, and LAAL…LTAL. Positions 30 to 221 constitute an ABC transmembrane type-1 domain; the sequence is LWGTLKSAVF…VLNFSLTALA (192 aa). Residues 242–273 are disordered; the sequence is PEQPDQGLETKDNVNVDWQDPDYKDLKTPGVQ. Residues 262-273 are compositionally biased toward basic and acidic residues; the sequence is PDYKDLKTPGVQ.

This sequence belongs to the binding-protein-dependent transport system permease family. HisMQ subfamily. The complex is composed of two ATP-binding proteins (GluA), two transmembrane proteins (GluC and GluD) and a solute-binding protein (GluB).

It is found in the cell membrane. In terms of biological role, part of the ABC transporter complex GluABCD involved in glutamate uptake. Probably responsible for the translocation of the substrate across the membrane. This Corynebacterium glutamicum (strain ATCC 13032 / DSM 20300 / JCM 1318 / BCRC 11384 / CCUG 27702 / LMG 3730 / NBRC 12168 / NCIMB 10025 / NRRL B-2784 / 534) protein is Glutamate transport system permease protein GluD.